Consider the following 128-residue polypeptide: Ribonuclease pancreatic B (128 aa).

Residues 1–21 form a disordered region; the sequence is AESSAMKFQRQHMDPEGSPSN. Residues lysine 7 and arginine 10 each contribute to the substrate site. Histidine 12 serves as the catalytic Proton acceptor. Asparagine 21 and asparagine 34 each carry an N-linked (GlcNAc...) asparagine glycan. 4 cysteine pairs are disulfide-bonded: cysteine 26–cysteine 84, cysteine 40–cysteine 95, cysteine 58–cysteine 110, and cysteine 65–cysteine 72. Substrate contacts are provided by residues 41–45, lysine 66, and arginine 85; that span reads KPVNT. The Proton donor role is filled by histidine 119.

Belongs to the pancreatic ribonuclease family. In terms of tissue distribution, pancreas.

The protein resides in the secreted. It catalyses the reaction an [RNA] containing cytidine + H2O = an [RNA]-3'-cytidine-3'-phosphate + a 5'-hydroxy-ribonucleotide-3'-[RNA].. The catalysed reaction is an [RNA] containing uridine + H2O = an [RNA]-3'-uridine-3'-phosphate + a 5'-hydroxy-ribonucleotide-3'-[RNA].. The chain is Ribonuclease pancreatic B from Cavia porcellus (Guinea pig).